The primary structure comprises 434 residues: 3-phosphoshikimate 1-carboxyvinyltransferase (434 aa).

Positions 15, 16, and 20 each coordinate 3-phosphoshikimate. K15 lines the phosphoenolpyruvate pocket. Residues G96 and R124 each contribute to the phosphoenolpyruvate site. 5 residues coordinate 3-phosphoshikimate: S169, Q171, S195, D319, and K346. Q171 contributes to the phosphoenolpyruvate binding site. Residue D319 is the Proton acceptor of the active site. R350 and R394 together coordinate phosphoenolpyruvate.

This sequence belongs to the EPSP synthase family. In terms of assembly, monomer.

It is found in the cytoplasm. The catalysed reaction is 3-phosphoshikimate + phosphoenolpyruvate = 5-O-(1-carboxyvinyl)-3-phosphoshikimate + phosphate. It functions in the pathway metabolic intermediate biosynthesis; chorismate biosynthesis; chorismate from D-erythrose 4-phosphate and phosphoenolpyruvate: step 6/7. Functionally, catalyzes the transfer of the enolpyruvyl moiety of phosphoenolpyruvate (PEP) to the 5-hydroxyl of shikimate-3-phosphate (S3P) to produce enolpyruvyl shikimate-3-phosphate and inorganic phosphate. This is 3-phosphoshikimate 1-carboxyvinyltransferase from Prosthecochloris aestuarii (strain DSM 271 / SK 413).